The primary structure comprises 132 residues: MNKKKKINRTKVDTVRSVNNNIRSSVRKLNPILKAIVGKKVDVAIRELQFSAKRITREIRKTVSSAVANAENNNQYDIDKLIVKEAYCGKKVVMKRFRPRAKGRAAPILKPYSTITIILSEAKQMESHGSKS.

The protein belongs to the universal ribosomal protein uL22 family. As to quaternary structure, part of the 50S ribosomal subunit.

In terms of biological role, this protein binds specifically to 23S rRNA; its binding is stimulated by other ribosomal proteins, e.g. L4, L17, and L20. It is important during the early stages of 50S assembly. It makes multiple contacts with different domains of the 23S rRNA in the assembled 50S subunit and ribosome. Its function is as follows. The globular domain of the protein is located near the polypeptide exit tunnel on the outside of the subunit, while an extended beta-hairpin is found that lines the wall of the exit tunnel in the center of the 70S ribosome. The sequence is that of Large ribosomal subunit protein uL22 from Pelagibacter ubique (strain HTCC1062).